The sequence spans 1012 residues: Formate dehydrogenase 2 subunit alpha (cytochrome c-553) (1012 aa).

The segment at residues 1–33 (MKTTRRSFLKLVGVSVVGLSLGQLGFDLEDAQA) is a signal peptide (tat-type signal). One can recognise a 4Fe-4S Mo/W bis-MGD-type domain in the interval 43–99 (AKEVGTVCPFCSVCCQVIAYVRNGKLVSTEGDPDFPVNEGALCAKGAALFSMYTNPH). [4Fe-4S] cluster contacts are provided by Cys-50, Cys-53, Cys-57, and Cys-85. Sec-189 serves as a coordination point for W-bis(molybdopterin guanine dinucleotide). Sec-189 is a non-standard amino acid (selenocysteine). 5 residues coordinate Ca(2+): Thr-389, Arg-391, Lys-394, Leu-424, and Asn-426.

Belongs to the prokaryotic molybdopterin-containing oxidoreductase family. In terms of assembly, heterotrimer of cytochrome c3 FDH2C and formate dehydrogenase FDH2 alpha and beta subunits that forms the FdhABC(3) complex. The cofactor is [4Fe-4S] cluster. Requires W-bis(molybdopterin guanine dinucleotide) as cofactor. Post-translationally, predicted to be exported by the Tat system. The position of the signal peptide cleavage has not been experimentally proven.

It localises to the periplasm. The enzyme catalyses 2 Fe(III)-[cytochrome c553] + formate = 2 Fe(II)-[cytochrome c553] + CO2 + H(+). In terms of biological role, alpha chain of the formate dehydrogenase (FDH) that catalyzes the reversible two-electron oxidation of formate to carbon dioxide. The alpha subunit of formate dehydrogenase forms the active site. The sequence is that of Formate dehydrogenase 2 subunit alpha (cytochrome c-553) from Nitratidesulfovibrio vulgaris (strain ATCC 29579 / DSM 644 / CCUG 34227 / NCIMB 8303 / VKM B-1760 / Hildenborough) (Desulfovibrio vulgaris).